A 741-amino-acid chain; its full sequence is Catalase-peroxidase (741 aa).

The tryptophyl-tyrosyl-methioninium (Trp-Tyr) (with M-234) cross-link spans 86-208 (WHSAGSYRIF…FAATEMGLIY (123 aa)). The Proton acceptor role is filled by H87. The segment at residues 208 to 234 (YVNPEGPGGNPDPLGSAQEIRVAFRRM) is a cross-link (tryptophyl-tyrosyl-methioninium (Tyr-Met) (with W-86)). H249 is a binding site for heme b.

The protein belongs to the peroxidase family. Peroxidase/catalase subfamily. Homodimer or homotetramer. The cofactor is heme b. Post-translationally, formation of the three residue Trp-Tyr-Met cross-link is important for the catalase, but not the peroxidase activity of the enzyme.

It catalyses the reaction H2O2 + AH2 = A + 2 H2O. The enzyme catalyses 2 H2O2 = O2 + 2 H2O. In terms of biological role, bifunctional enzyme with both catalase and broad-spectrum peroxidase activity. Also displays NADH oxidase, INH lyase and isonicotinoyl-NAD synthase activities. This Archaeoglobus fulgidus (strain ATCC 49558 / DSM 4304 / JCM 9628 / NBRC 100126 / VC-16) protein is Catalase-peroxidase.